The chain runs to 213 residues: ATP phosphoribosyltransferase (213 aa).

Belongs to the ATP phosphoribosyltransferase family. Short subfamily. As to quaternary structure, heteromultimer composed of HisG and HisZ subunits.

It localises to the cytoplasm. The catalysed reaction is 1-(5-phospho-beta-D-ribosyl)-ATP + diphosphate = 5-phospho-alpha-D-ribose 1-diphosphate + ATP. Its pathway is amino-acid biosynthesis; L-histidine biosynthesis; L-histidine from 5-phospho-alpha-D-ribose 1-diphosphate: step 1/9. Functionally, catalyzes the condensation of ATP and 5-phosphoribose 1-diphosphate to form N'-(5'-phosphoribosyl)-ATP (PR-ATP). Has a crucial role in the pathway because the rate of histidine biosynthesis seems to be controlled primarily by regulation of HisG enzymatic activity. In Chromobacterium violaceum (strain ATCC 12472 / DSM 30191 / JCM 1249 / CCUG 213 / NBRC 12614 / NCIMB 9131 / NCTC 9757 / MK), this protein is ATP phosphoribosyltransferase.